A 133-amino-acid chain; its full sequence is Ribosome-binding factor A (133 aa).

It belongs to the RbfA family. Monomer. Binds 30S ribosomal subunits, but not 50S ribosomal subunits or 70S ribosomes.

It localises to the cytoplasm. In terms of biological role, one of several proteins that assist in the late maturation steps of the functional core of the 30S ribosomal subunit. Associates with free 30S ribosomal subunits (but not with 30S subunits that are part of 70S ribosomes or polysomes). Required for efficient processing of 16S rRNA. May interact with the 5'-terminal helix region of 16S rRNA. In Alteromonas mediterranea (strain DSM 17117 / CIP 110805 / LMG 28347 / Deep ecotype), this protein is Ribosome-binding factor A.